Reading from the N-terminus, the 119-residue chain is MAFDPASLTFDANGLIPAVAQDHATGEVLMMAWMNAEAVARTLETGRVTYWSRSRQAFWVKGETSGHVQRLIELRIDCDRDCLLLLIEQEGPACHTNRRSCFYTALREGEERIVLDPMV.

Residue Asp77 participates in Mg(2+) binding. Residue Cys78 participates in Zn(2+) binding. Residues Asp79 and Asp81 each coordinate Mg(2+). Residues Cys94 and Cys101 each contribute to the Zn(2+) site.

Belongs to the PRA-CH family. As to quaternary structure, homodimer. It depends on Mg(2+) as a cofactor. Requires Zn(2+) as cofactor.

The protein localises to the cytoplasm. The catalysed reaction is 1-(5-phospho-beta-D-ribosyl)-5'-AMP + H2O = 1-(5-phospho-beta-D-ribosyl)-5-[(5-phospho-beta-D-ribosylamino)methylideneamino]imidazole-4-carboxamide. It functions in the pathway amino-acid biosynthesis; L-histidine biosynthesis; L-histidine from 5-phospho-alpha-D-ribose 1-diphosphate: step 3/9. Functionally, catalyzes the hydrolysis of the adenine ring of phosphoribosyl-AMP. In Cereibacter sphaeroides (strain KD131 / KCTC 12085) (Rhodobacter sphaeroides), this protein is Phosphoribosyl-AMP cyclohydrolase.